We begin with the raw amino-acid sequence, 397 residues long: ATP-dependent RNA helicase FAL1 (397 aa).

The short motif at 24 to 52 (PTFESMDLKDDLLRGIYAYGFEAPSAIQS) is the Q motif element. The Helicase ATP-binding domain occupies 55–225 (ITQIIKGRDT…SKFMTDPVRI (171 aa)). 68 to 75 (AQSGTGKT) contributes to the ATP binding site. The DEAD box motif lies at 173–176 (DEAD). In terms of domain architecture, Helicase C-terminal spans 236–397 (GLKQYFIAVE…EMPVNVTDMM (162 aa)).

Belongs to the DEAD box helicase family. DDX48/FAL1 subfamily.

The protein localises to the nucleus. It is found in the nucleolus. It catalyses the reaction ATP + H2O = ADP + phosphate + H(+). Its function is as follows. ATP-dependent RNA helicase involved in 40S ribosomal subunit biogenesis. Required for the processing and cleavage of 35S pre-rRNA at sites A0, A1, and A2, leading to mature 18S rRNA. The protein is ATP-dependent RNA helicase FAL1 (FAL1) of Yarrowia lipolytica (strain CLIB 122 / E 150) (Yeast).